The following is a 413-amino-acid chain: Patatin-like protein 3 (413 aa).

Residues 54-245 enclose the PNPLA domain; sequence LSVDGGARPE…ALGNPTAAAI (192 aa). A GGXR motif is present at residues 58–61; sequence GGAR. Serine 100 (nucleophile) is an active-site residue. Residues 384–413 form a disordered region; it reads EHGRRKQHVPPAASGGGGGGLDCHVSKKQP.

The protein belongs to the patatin family.

Possesses non-specific lipolytic acyl hydrolase (LAH) activity. Hydrolyzes phospholipids as well as galactolipids. May play a role in disease resistance. The sequence is that of Patatin-like protein 3 (PLP3) from Oryza sativa subsp. indica (Rice).